A 185-amino-acid polypeptide reads, in one-letter code: Ribosome-recycling factor (185 aa).

The protein belongs to the RRF family.

The protein resides in the cytoplasm. Its function is as follows. Responsible for the release of ribosomes from messenger RNA at the termination of protein biosynthesis. May increase the efficiency of translation by recycling ribosomes from one round of translation to another. The chain is Ribosome-recycling factor from Francisella tularensis subsp. tularensis (strain FSC 198).